The primary structure comprises 351 residues: Heat shock factor protein HSF30 (351 aa).

Residues 29-123 mediate DNA binding; it reads PPPFLSKTYE…LLKTIKRRRN (95 aa).

Belongs to the HSF family. As to quaternary structure, homotrimer. Exhibits temperature-dependent phosphorylation.

It localises to the nucleus. In terms of biological role, DNA-binding protein that specifically binds heat shock promoter elements (HSE) and activates transcription. The protein is Heat shock factor protein HSF30 (HSF30) of Solanum peruvianum (Peruvian tomato).